The sequence spans 104 residues: uncharacterized protein (104 aa).

2 helical membrane passes run 16-36 (LAFF…LASY) and 44-64 (GGFG…FLCI).

It is found in the cell membrane. This is an uncharacterized protein from Bacillus anthracis.